We begin with the raw amino-acid sequence, 345 residues long: Holliday junction branch migration complex subunit RuvB (345 aa).

A large ATPase domain (RuvB-L) region spans residues 4 to 185; the sequence is LDNRFVTPLS…FGVLCPMEFY (182 aa). ATP is bound by residues leucine 24, arginine 25, glycine 66, lysine 69, threonine 70, threonine 71, 132 to 134, arginine 175, tyrosine 185, and arginine 222; that span reads EDY. Residue threonine 70 participates in Mg(2+) binding. The interval 186–256 is small ATPAse domain (RuvB-S); it reads NEEELKDIIV…MTNKALNLLE (71 aa). The head domain (RuvB-H) stretch occupies residues 259 to 345; it reads KEGFDSIDTK…ENINQYKFKI (87 aa). 2 residues coordinate DNA: arginine 314 and arginine 319.

The protein belongs to the RuvB family. As to quaternary structure, homohexamer. Forms an RuvA(8)-RuvB(12)-Holliday junction (HJ) complex. HJ DNA is sandwiched between 2 RuvA tetramers; dsDNA enters through RuvA and exits via RuvB. An RuvB hexamer assembles on each DNA strand where it exits the tetramer. Each RuvB hexamer is contacted by two RuvA subunits (via domain III) on 2 adjacent RuvB subunits; this complex drives branch migration. In the full resolvosome a probable DNA-RuvA(4)-RuvB(12)-RuvC(2) complex forms which resolves the HJ.

The protein resides in the cytoplasm. The enzyme catalyses ATP + H2O = ADP + phosphate + H(+). Its function is as follows. The RuvA-RuvB-RuvC complex processes Holliday junction (HJ) DNA during genetic recombination and DNA repair, while the RuvA-RuvB complex plays an important role in the rescue of blocked DNA replication forks via replication fork reversal (RFR). RuvA specifically binds to HJ cruciform DNA, conferring on it an open structure. The RuvB hexamer acts as an ATP-dependent pump, pulling dsDNA into and through the RuvAB complex. RuvB forms 2 homohexamers on either side of HJ DNA bound by 1 or 2 RuvA tetramers; 4 subunits per hexamer contact DNA at a time. Coordinated motions by a converter formed by DNA-disengaged RuvB subunits stimulates ATP hydrolysis and nucleotide exchange. Immobilization of the converter enables RuvB to convert the ATP-contained energy into a lever motion, pulling 2 nucleotides of DNA out of the RuvA tetramer per ATP hydrolyzed, thus driving DNA branch migration. The RuvB motors rotate together with the DNA substrate, which together with the progressing nucleotide cycle form the mechanistic basis for DNA recombination by continuous HJ branch migration. Branch migration allows RuvC to scan DNA until it finds its consensus sequence, where it cleaves and resolves cruciform DNA. The sequence is that of Holliday junction branch migration complex subunit RuvB from Clostridium tetani (strain Massachusetts / E88).